The following is a 57-amino-acid chain: uncharacterized protein (57 aa).

Residues 34-51 (TALLDAAAVVVVPGLLAA) traverse the membrane as a helical segment.

The protein resides in the membrane. This is an uncharacterized protein from Dictyostelium discoideum (Social amoeba).